A 263-amino-acid polypeptide reads, in one-letter code: 3-methyl-2-oxobutanoate hydroxymethyltransferase (263 aa).

Mg(2+) contacts are provided by Asp45 and Asp84. Residues 45–46 (DS), Asp84, and Lys112 each bind 3-methyl-2-oxobutanoate. Residue Glu114 coordinates Mg(2+). Glu180 functions as the Proton acceptor in the catalytic mechanism.

It belongs to the PanB family. Homodecamer; pentamer of dimers. Mg(2+) is required as a cofactor.

The protein resides in the cytoplasm. The enzyme catalyses 3-methyl-2-oxobutanoate + (6R)-5,10-methylene-5,6,7,8-tetrahydrofolate + H2O = 2-dehydropantoate + (6S)-5,6,7,8-tetrahydrofolate. It participates in cofactor biosynthesis; (R)-pantothenate biosynthesis; (R)-pantoate from 3-methyl-2-oxobutanoate: step 1/2. Catalyzes the reversible reaction in which hydroxymethyl group from 5,10-methylenetetrahydrofolate is transferred onto alpha-ketoisovalerate to form ketopantoate. The protein is 3-methyl-2-oxobutanoate hydroxymethyltransferase of Klebsiella pneumoniae (strain 342).